The following is a 294-amino-acid chain: Tryptophan 2,3-dioxygenase (294 aa).

Substrate-binding positions include 63 to 67, tyrosine 125, and arginine 129; that span reads FIIQH. Residue histidine 252 participates in heme binding. Threonine 266 lines the substrate pocket.

This sequence belongs to the tryptophan 2,3-dioxygenase family. Homotetramer. It depends on heme as a cofactor.

The enzyme catalyses L-tryptophan + O2 = N-formyl-L-kynurenine. Its pathway is amino-acid degradation; L-tryptophan degradation via kynurenine pathway; L-kynurenine from L-tryptophan: step 1/2. Heme-dependent dioxygenase that catalyzes the oxidative cleavage of the L-tryptophan (L-Trp) pyrrole ring and converts L-tryptophan to N-formyl-L-kynurenine. Catalyzes the oxidative cleavage of the indole moiety. In Polaromonas sp. (strain JS666 / ATCC BAA-500), this protein is Tryptophan 2,3-dioxygenase.